The primary structure comprises 96 residues: Neutrophil defensin 3 (96 aa).

An N-terminal signal peptide occupies residues 1–19; it reads MRTLVILAAILLVALQAQA. The propeptide occupies 20–66; that stretch reads EPLQARTDEATAAQEQIPTDNPEVVVSLAWDESLAPKDSVPGLRKNM. Intrachain disulfides connect C68/C96, C70/C85, and C75/C95.

The protein resides in the secreted. In terms of biological role, has bacteriostatic activity against Gram-positive bacteria S.aureus and L.monocytogenes and Gram-negative bacterium E.coli and antifungal activity against C.neoformans. This Macaca mulatta (Rhesus macaque) protein is Neutrophil defensin 3.